Reading from the N-terminus, the 226-residue chain is PKHD-type hydroxylase PputW619_4316 (226 aa).

The Fe2OG dioxygenase domain maps to 78 to 178 (KVFPPLINCY…RYAAFFWTQS (101 aa)). Positions 96, 98, and 159 each coordinate Fe cation. Arg169 is a binding site for 2-oxoglutarate.

Requires Fe(2+) as cofactor. L-ascorbate is required as a cofactor.

The polypeptide is PKHD-type hydroxylase PputW619_4316 (Pseudomonas putida (strain W619)).